The following is a 200-amino-acid chain: Large ribosomal subunit protein uL4 (200 aa).

Positions 44–71 (AQKTRAEVSGGGKKPWRQKGTGRARAGS) are disordered.

Belongs to the universal ribosomal protein uL4 family. In terms of assembly, part of the 50S ribosomal subunit.

Functionally, one of the primary rRNA binding proteins, this protein initially binds near the 5'-end of the 23S rRNA. It is important during the early stages of 50S assembly. It makes multiple contacts with different domains of the 23S rRNA in the assembled 50S subunit and ribosome. Forms part of the polypeptide exit tunnel. This is Large ribosomal subunit protein uL4 from Psychrobacter sp. (strain PRwf-1).